Here is a 222-residue protein sequence, read N- to C-terminus: UPF0173 metal-dependent hydrolase Mboo_0816 (222 aa).

It belongs to the UPF0173 family.

The polypeptide is UPF0173 metal-dependent hydrolase Mboo_0816 (Methanoregula boonei (strain DSM 21154 / JCM 14090 / 6A8)).